The following is a 535-amino-acid chain: Methylmalonate-semialdehyde/malonate-semialdehyde dehydrogenase [acylating], mitochondrial (535 aa).

The N-terminal 32 residues, 1-32 (MAAAVAAAAAVRSRILQVSSKVNSTWYPASSF), are a transit peptide targeting the mitochondrion. K47, K52, K55, and K76 each carry N6-acetyllysine; alternate. K47, K52, K55, and K76 each carry N6-succinyllysine; alternate. At K87 the chain carries N6-acetyllysine. An N6-acetyllysine; alternate mark is found at K117 and K129. N6-succinyllysine; alternate is present on residues K117 and K129. Residues A183, F185, K209, E212, R213, and S262 each contribute to the NAD(+) site. At S262 the chain carries Phosphoserine. Residue K298 is modified to N6-acetyllysine. C317 (nucleophile) is an active-site residue. N6-acetyllysine occurs at positions 330 and 331. K364 and K376 each carry N6-acetyllysine; alternate. An N6-succinyllysine; alternate mark is found at K364 and K376. S380 carries the phosphoserine modification. An N6-succinyllysine modification is found at K391. NAD(+) is bound at residue E417. K500 carries the post-translational modification N6-acetyllysine. An N6-succinyllysine modification is found at K517.

The protein belongs to the aldehyde dehydrogenase family. Homotetramer. Expressed in the head and flagellum of epididymal sperm but not in testicular sperm (at protein level). Kidney &gt; liver &gt; heart &gt; muscle &gt; brain.

It localises to the mitochondrion. It catalyses the reaction 3-oxopropanoate + NAD(+) + CoA + H2O = hydrogencarbonate + acetyl-CoA + NADH + H(+). The catalysed reaction is 2-methyl-3-oxopropanoate + NAD(+) + CoA + H2O = propanoyl-CoA + hydrogencarbonate + NADH + H(+). It carries out the reaction (R)-2-methyl-3-oxopropanoate + NAD(+) + CoA + H2O = propanoyl-CoA + hydrogencarbonate + NADH + H(+). The enzyme catalyses (S)-2-methyl-3-oxopropanoate + NAD(+) + CoA + H2O = propanoyl-CoA + hydrogencarbonate + NADH + H(+). Its function is as follows. Malonate and methylmalonate semialdehyde dehydrogenase involved in the catabolism of valine, thymine, and compounds catabolized by way of beta-alanine, including uracil and cytidine. The protein is Methylmalonate-semialdehyde/malonate-semialdehyde dehydrogenase [acylating], mitochondrial of Rattus norvegicus (Rat).